Here is a 375-residue protein sequence, read N- to C-terminus: MGSRRFDAEVYARRLALAAAATADAGLAGLVITPGYDLCYLIGSRAETFERLTALVLPAAGAPAVVLPRLELAALKQSAAAELGLRVCDWVDGDDPYGLVSAVLGGAPVATAVTDSMPALHMLPLADALGVLPVLATDVLRRLRMVKEETEIDALRKAGAAIDRVHARVPEFLVPGRTEADVAADIAEAIVAEGHSEVAFVIVGSGPHGADPHHGYSDRELREGDIVVVDIGGTYGPGYHSDSTRTYSIGEPDSDVAQSYSMLQRAQRAAFEAIRPGVTAEQVDAAARDVLAEAGLAEYFVHRTGHGIGLCVHEEPYIVAGNDLVLVPGMAFSIEPGIYFPGRWGARIEDIVIVTEDGAVSVNNCPHELIVVPVS.

2 helical membrane passes run leucine 15–glycine 35 and leucine 55–leucine 75. Aspartate 230, aspartate 242, histidine 306, glutamate 335, and glutamate 349 together coordinate Mn(2+).

It belongs to the peptidase M24B family. Mn(2+) is required as a cofactor.

It is found in the cell membrane. The chain is Probable dipeptidase PepE (pepE) from Mycobacterium bovis (strain ATCC BAA-935 / AF2122/97).